Reading from the N-terminus, the 261-residue chain is Ribosomal RNA small subunit methyltransferase A (261 aa).

H12, L14, G39, E60, D81, and N104 together coordinate S-adenosyl-L-methionine.

It belongs to the class I-like SAM-binding methyltransferase superfamily. rRNA adenine N(6)-methyltransferase family. RsmA subfamily.

Its subcellular location is the cytoplasm. The enzyme catalyses adenosine(1518)/adenosine(1519) in 16S rRNA + 4 S-adenosyl-L-methionine = N(6)-dimethyladenosine(1518)/N(6)-dimethyladenosine(1519) in 16S rRNA + 4 S-adenosyl-L-homocysteine + 4 H(+). Specifically dimethylates two adjacent adenosines (A1518 and A1519) in the loop of a conserved hairpin near the 3'-end of 16S rRNA in the 30S particle. May play a critical role in biogenesis of 30S subunits. The polypeptide is Ribosomal RNA small subunit methyltransferase A (Albidiferax ferrireducens (strain ATCC BAA-621 / DSM 15236 / T118) (Rhodoferax ferrireducens)).